An 812-amino-acid polypeptide reads, in one-letter code: Valine--tRNA ligase (812 aa).

The 'HIGH' region motif lies at proline 46 to histidine 56. Residues lysine 536–serine 540 carry the 'KMSKS' region motif. An ATP-binding site is contributed by lysine 539.

Belongs to the class-I aminoacyl-tRNA synthetase family. ValS type 2 subfamily. Monomer.

Its subcellular location is the cytoplasm. The catalysed reaction is tRNA(Val) + L-valine + ATP = L-valyl-tRNA(Val) + AMP + diphosphate. Catalyzes the attachment of valine to tRNA(Val). As ValRS can inadvertently accommodate and process structurally similar amino acids such as threonine, to avoid such errors, it has a 'posttransfer' editing activity that hydrolyzes mischarged Thr-tRNA(Val) in a tRNA-dependent manner. This chain is Valine--tRNA ligase, found in Rickettsia bellii (strain RML369-C).